The primary structure comprises 595 residues: Elongation factor 4 (595 aa).

Positions Lys2–Lys184 constitute a tr-type G domain. GTP-binding positions include Asp14–Thr19 and Asn131–Asp134.

Belongs to the TRAFAC class translation factor GTPase superfamily. Classic translation factor GTPase family. LepA subfamily.

The protein resides in the cell inner membrane. The enzyme catalyses GTP + H2O = GDP + phosphate + H(+). In terms of biological role, required for accurate and efficient protein synthesis under certain stress conditions. May act as a fidelity factor of the translation reaction, by catalyzing a one-codon backward translocation of tRNAs on improperly translocated ribosomes. Back-translocation proceeds from a post-translocation (POST) complex to a pre-translocation (PRE) complex, thus giving elongation factor G a second chance to translocate the tRNAs correctly. Binds to ribosomes in a GTP-dependent manner. In Ruthia magnifica subsp. Calyptogena magnifica, this protein is Elongation factor 4.